Here is a 152-residue protein sequence, read N- to C-terminus: Peptide deformylase (152 aa).

Cys-88 and His-130 together coordinate Fe cation. Glu-131 is a catalytic residue. His-134 provides a ligand contact to Fe cation.

Belongs to the polypeptide deformylase family. Fe(2+) serves as cofactor.

It carries out the reaction N-terminal N-formyl-L-methionyl-[peptide] + H2O = N-terminal L-methionyl-[peptide] + formate. In terms of biological role, removes the formyl group from the N-terminal Met of newly synthesized proteins. Requires at least a dipeptide for an efficient rate of reaction. N-terminal L-methionine is a prerequisite for activity but the enzyme has broad specificity at other positions. The chain is Peptide deformylase from Carboxydothermus hydrogenoformans (strain ATCC BAA-161 / DSM 6008 / Z-2901).